A 125-amino-acid polypeptide reads, in one-letter code: Apolipoprotein C-IV (125 aa).

The signal sequence occupies residues 1–27; sequence MSLLRHSLQALPALCLCVLVLACIGAC.

The protein belongs to the apolipoprotein C4 family.

Its subcellular location is the secreted. Its function is as follows. May participate in lipoprotein metabolism. This Ateles geoffroyi (Black-handed spider monkey) protein is Apolipoprotein C-IV (APOC4).